The primary structure comprises 110 residues: Putative caspase recruitment domain-containing protein 17P (110 aa).

Positions Met1–Ala91 constitute a CARD domain.

Interacts with pro-CASP1. In terms of tissue distribution, ubiquitous.

The protein resides in the cytoplasm. Its function is as follows. Regulator of procaspase-1/CASP1 activation implicated in the regulation of the proteolytic maturation of pro-IL-1beta/IL1B and its release during inflammation. Inhibits the release of IL1B in response to LPS in monocytes. However, unlike CASP1, do not induce NF-kappa-B activation. The polypeptide is Putative caspase recruitment domain-containing protein 17P (CARD17P) (Homo sapiens (Human)).